Reading from the N-terminus, the 804-residue chain is Leucine--tRNA ligase (804 aa).

A 'HIGH' region motif is present at residues 39 to 50 (PYPSGKGLHVGH). A 'KMSKS' region motif is present at residues 573 to 577 (KMSKS). Lysine 576 is an ATP binding site.

Belongs to the class-I aminoacyl-tRNA synthetase family.

The protein localises to the cytoplasm. It catalyses the reaction tRNA(Leu) + L-leucine + ATP = L-leucyl-tRNA(Leu) + AMP + diphosphate. The protein is Leucine--tRNA ligase of Lactobacillus delbrueckii subsp. bulgaricus (strain ATCC 11842 / DSM 20081 / BCRC 10696 / JCM 1002 / NBRC 13953 / NCIMB 11778 / NCTC 12712 / WDCM 00102 / Lb 14).